The sequence spans 310 residues: MRLVVSSCLLVAAPFLSSLLRVSLATVVLNSISASFADLPAKFDGSVTKNGICGALYVADPLDGCSPLLHAAASNWTQHRTTKFALIIRGECSFEDKLLNAQNSGFQAVIVYDNIDNEDLIVMKVNPQDITVDAVFVSNVAGEILRKYARGRDGECCLNPPDRGSAWTVLAISFFSLLLIVTFLLIAFFAPRHWTQWRGRHTRTIRLDAKLVHTLPCFTFTDSAHHKAGETCAICLEDYRFGESLRLLPCQHAFHLNCIDSWLTKWGTSCPVCKHDIRTETMSSEVHKRESPRTDTSTSRFAFAQSSQSR.

The signal sequence occupies residues 1–25 (MRLVVSSCLLVAAPFLSSLLRVSLA). The Lumenal segment spans residues 26–168 (TVVLNSISAS…NPPDRGSAWT (143 aa)). A disulfide bridge links cysteine 65 with cysteine 92. An N-linked (GlcNAc...) asparagine glycan is attached at asparagine 75. One can recognise a PA domain in the interval 81–149 (TTKFALIIRG…VAGEILRKYA (69 aa)). The helical transmembrane segment at 169–189 (VLAISFFSLLLIVTFLLIAFF) threads the bilayer. Topologically, residues 190 to 310 (APRHWTQWRG…FAFAQSSQSR (121 aa)) are cytoplasmic. The RING-type; atypical zinc-finger motif lies at 232 to 274 (CAICLEDYRFGESLRLLPCQHAFHLNCIDSWLTKWGTSCPVCK). The span at 284–293 (SEVHKRESPR) shows a compositional bias: basic and acidic residues. Residues 284–310 (SEVHKRESPRTDTSTSRFAFAQSSQSR) are disordered. The segment covering 294-310 (TDTSTSRFAFAQSSQSR) has biased composition (polar residues).

Expressed in leaves, stems, flowers and siliques.

It is found in the prevacuolar compartment membrane. The protein resides in the protein storage vacuole membrane. It localises to the golgi apparatus membrane. Functionally, involved in the trafficking of vacuolar proteins. Functions probably as a sorting receptor for protein trafficking to the protein storage vacuole (PSV) by binding the C-terminal vacuolar sorting determinant (VSD) of vacuolar-sorted proteins. This is Receptor homology region, transmembrane domain- and RING domain-containing protein 1 (RMR1) from Arabidopsis thaliana (Mouse-ear cress).